The primary structure comprises 415 residues: Sucrose permease (415 aa).

The Cytoplasmic segment spans residues 1 to 16 (MALNIPFRNAYYRFAS). Residues 17-37 (SYSFLFFISWSLWWSLYAIWL) traverse the membrane as a helical segment. At 38–48 (KGHLGLTGTEL) the chain is on the periplasmic side. A helical transmembrane segment spans residues 49–69 (GTLYSVNQFTSILFMMFYGIV). The Cytoplasmic segment spans residues 70-77 (QDKLGLKK). Residues 78-98 (PLIWCMSFILVLTGPFMIYVY) form a helical membrane-spanning segment. At 99–107 (EPLLQSNFS) the chain is on the periplasmic side. Residues 108 to 128 (VGLILGALFFGLGYLAGCGLL) traverse the membrane as a helical segment. Topologically, residues 129–147 (DSFTEKMARNFHFEYGTAR) are cytoplasmic. Residues 148 to 167 (AWGSFGYAIGAFFAGIFFSI) traverse the membrane as a helical segment. Topologically, residues 168-170 (SPH) are periplasmic. Residues 171-190 (INFWLVSLFGAVFMMINMRF) traverse the membrane as a helical segment. The Cytoplasmic portion of the chain corresponds to 191–220 (KDKDHQCIAADAGGVKKEDFIAVFKDRNFW). A helical membrane pass occupies residues 221-241 (VFVIFIVGTWSFYNIFDQQLF). The Periplasmic segment spans residues 242–260 (PVFYAGLFESHDVGTRLYG). A helical membrane pass occupies residues 261 to 281 (YLNSFQVVLEALCMAIIPFFV). Residues 282 to 287 (NRVGPK) are Cytoplasmic-facing. The chain crosses the membrane as a helical span at residues 288 to 308 (NALLIGVVIMALRILSCALFV). Residues 309-311 (NPW) are Periplasmic-facing. The chain crosses the membrane as a helical span at residues 312–332 (IISLVKLLHAIEVPLCVISVF). At 333 to 342 (KYSVANFDKR) the chain is on the cytoplasmic side. Residues 343–363 (LSSTIFLIGFQIASSLGIVLL) form a helical membrane-spanning segment. Over 364–377 (STPTGILFDHAGYQ) the chain is Periplasmic. The helical transmembrane segment at 378 to 398 (TVFFAISGIVCLMLLFGIFFL) threads the bilayer. At 399–415 (SKKREQIVMETPVPSAI) the chain is on the cytoplasmic side.

It belongs to the major facilitator superfamily. Oligosaccharide:H(+) symporter (OHS) (TC 2.A.1.5) family.

It is found in the cell inner membrane. Its pathway is glycan biosynthesis; sucrose metabolism. Its function is as follows. Responsible for transport of sucrose into the cell, with the concomitant import of a proton (symport system). Can also transport maltose, fructose or lactulose, but not glucose, lactose or melibiose. The substrate specificity is directed toward the fructofuranosyl moiety of the substrate. This chain is Sucrose permease, found in Escherichia coli.